A 270-amino-acid polypeptide reads, in one-letter code: uncharacterized protein (270 aa).

The Cytoplasmic segment spans residues 1–37; it reads MATHTSKRRIHRWENNELSEENSTIIYFPARGLMWTH. The helical transmembrane segment at 38–58 threads the bilayer; it reads FPFVLGICLEFVGYVLKIVFI. Residues 59-65 lie on the Extracellular side of the membrane; that stretch reads NSPSIST. A helical membrane pass occupies residues 66 to 86; sequence FIAQSVLLLIAPSLYALSIFM. Over 87–93 the chain is Cytoplasmic; the sequence is LFSKMAR. A helical membrane pass occupies residues 94-114; the sequence is LILMEAYMLIPAKFSTVSFVV. Residues 115 to 140 lie on the Extracellular side of the membrane; the sequence is ADMIGRVLQAVGGGLLSSWNSRNTGR. The chain crosses the membrane as a helical span at residues 141 to 161; the sequence is ILIIVGLFIQIFCYTFLTFSQ. Topologically, residues 162–181 are cytoplasmic; sequence LFLHYKMKATPSKIVRDSNE. The helical transmembrane segment at 182-202 threads the bilayer; sequence WFQYNFILLAGILLVNGRTIV. Topologically, residues 203 to 220 are extracellular; the sequence is RVVQFLMGLQSYIGQHEW. Residues 221–241 traverse the membrane as a helical segment; that stretch reads CLYVFDTVLMFLLPLIFLATF. The Cytoplasmic segment spans residues 242 to 270; sequence RARNLFKLQDKSVNIQLNKLLDKESVSED.

This sequence belongs to the lipid-translocating exporter (LTE) (TC 9.A.26.1) family.

It is found in the membrane. This is an uncharacterized protein from Saccharomyces cerevisiae (strain ATCC 204508 / S288c) (Baker's yeast).